The primary structure comprises 378 residues: Mannitol-1-phosphate 5-dehydrogenase (378 aa).

4–15 contributes to the NAD(+) binding site; it reads SVHFGAGNIGRG.

Belongs to the mannitol dehydrogenase family.

The enzyme catalyses D-mannitol 1-phosphate + NAD(+) = beta-D-fructose 6-phosphate + NADH + H(+). The chain is Mannitol-1-phosphate 5-dehydrogenase from Streptococcus pneumoniae serotype 4 (strain ATCC BAA-334 / TIGR4).